The primary structure comprises 323 residues: Sphingolipid delta(4)-desaturase/C4-monooxygenase DES2 (323 aa).

A lipid anchor (N-myristoyl glycine) is attached at glycine 2. Helical transmembrane passes span 45-65 (WTVT…QGLA) and 68-88 (WLFF…TLAI). The Histidine box-1 motif lies at 89–93 (HDISH). The interval 95–99 (TAFGT) is required for C4-hydroxylase activity. The Histidine box-2 signature appears at 128-132 (HVDHH). A helical transmembrane segment spans residues 209 to 231 (MVYLLASSLLGLGLHPISGHFVA). The short motif at 259–263 (HMEHH) is the Histidine box-3 element.

It belongs to the fatty acid desaturase type 1 family. DEGS subfamily.

It is found in the endoplasmic reticulum membrane. The enzyme catalyses a dihydroceramide + 2 Fe(II)-[cytochrome b5] + O2 + 2 H(+) = a phytoceramide + 2 Fe(III)-[cytochrome b5] + H2O. It catalyses the reaction an N-acylsphinganine + 2 Fe(II)-[cytochrome b5] + O2 + 2 H(+) = an N-acylsphing-4-enine + 2 Fe(III)-[cytochrome b5] + 2 H2O. The catalysed reaction is N-octanoylsphinganine + 2 Fe(II)-[cytochrome b5] + O2 + 2 H(+) = N-octanoyl-4-hydroxysphinganine + 2 Fe(III)-[cytochrome b5] + H2O. It carries out the reaction an N-acylsphinganine + 2 Fe(II)-[cytochrome b5] + O2 + 2 H(+) = an N-acyl-(4R)-4-hydroxysphinganine + 2 Fe(III)-[cytochrome b5] + H2O. It functions in the pathway membrane lipid metabolism; sphingolipid biosynthesis. Its function is as follows. Bifunctional enzyme which acts both as a sphingolipid delta(4)-desaturase and a sphingolipid C4-monooxygenase. The polypeptide is Sphingolipid delta(4)-desaturase/C4-monooxygenase DES2 (Bos taurus (Bovine)).